The sequence spans 326 residues: JNK1/MAPK8-associated membrane protein homolog (326 aa).

The Lumenal segment spans residues 1 to 71 (MSSLSGHAST…CESCDTPLQP (71 aa)). A glycan (N-linked (GlcNAc...) asparagine) is linked at Asn27. The helical transmembrane segment at 72 to 92 (YDWMYLLFIALLPLLLHMQFI) threads the bilayer. Topologically, residues 93-108 (RIARKYCRTRYYEVSE) are cytoplasmic. Residues 109 to 129 (YLCVILENVIACVIAVLIYPP) traverse the membrane as a helical segment. Residues 130–166 (RFTFFLNGCSKTDIKEWYPACYNPRIGYTKTMRCTYE) are Lumenal-facing. The chain crosses the membrane as a helical span at residues 167–187 (VVFPLYSITFIHHLILIGSIL). Residues 188–208 (VLRSTLYCVLLYKTYNGKPFY) lie on the Cytoplasmic side of the membrane. A run of 2 helical transmembrane segments spans residues 209 to 229 (AAIV…GVVF) and 230 to 250 (YTFP…HLAL). At 251 to 269 (EGKRPLKEMIVRIATSPTH) the chain is on the cytoplasmic side. A helical transmembrane segment spans residues 270 to 290 (LIFLSITMLMLSFGVIAIIAP). The Lumenal portion of the chain corresponds to 291 to 296 (LDIPYR). A helical membrane pass occupies residues 297 to 317 (WSFLCIVPVPFIFYMATIPFS). Residues 318–326 (NPTTTMRLS) lie on the Cytoplasmic side of the membrane.

It localises to the endoplasmic reticulum membrane. Facilitates degradation of misfolded endoplasmic reticulum (ER) proteins through the recruitment of components of the proteasome and endoplasmic reticulum-associated degradation (ERAD) system. Involved in ER stress response. This chain is JNK1/MAPK8-associated membrane protein homolog, found in Caenorhabditis elegans.